A 344-amino-acid polypeptide reads, in one-letter code: NADH-quinone oxidoreductase subunit H 2 (344 aa).

Helical transmembrane passes span 13–33 (LPILFKIVAIVLPLILIVAWL), 82–102 (ILFLLAPVLAIAPALAVWAVI), 116–136 (ALLYILAIGSMSVYGIILAGW), 161–181 (MGFALVGVLIAGGSLNLGEIV), 188–208 (FWHWFWLPLFPLFLIYFISGV), 240–260 (LFFLAEYIEMILVSTLAALMF), 280–300 (VPGIVWLLIKTAIFLFFYLWF), and 319–339 (VFIPITIVWLLVVGGARVAQL).

Belongs to the complex I subunit 1 family. In terms of assembly, NDH-1 is composed of 14 different subunits. Subunits NuoA, H, J, K, L, M, N constitute the membrane sector of the complex.

It localises to the cell inner membrane. It catalyses the reaction a quinone + NADH + 5 H(+)(in) = a quinol + NAD(+) + 4 H(+)(out). NDH-1 shuttles electrons from NADH, via FMN and iron-sulfur (Fe-S) centers, to quinones in the respiratory chain. The immediate electron acceptor for the enzyme in this species is believed to be ubiquinone. Couples the redox reaction to proton translocation (for every two electrons transferred, four hydrogen ions are translocated across the cytoplasmic membrane), and thus conserves the redox energy in a proton gradient. This subunit may bind ubiquinone. The chain is NADH-quinone oxidoreductase subunit H 2 from Nitrosococcus oceani (strain ATCC 19707 / BCRC 17464 / JCM 30415 / NCIMB 11848 / C-107).